Reading from the N-terminus, the 885-residue chain is Leucine--tRNA ligase (885 aa).

The 'HIGH' region motif lies at 48 to 58; that stretch reads PYPSGKLHMGH. The 'KMSKS' region motif lies at 639-643; it reads TMSKS. Lys642 lines the ATP pocket.

This sequence belongs to the class-I aminoacyl-tRNA synthetase family.

It localises to the cytoplasm. It carries out the reaction tRNA(Leu) + L-leucine + ATP = L-leucyl-tRNA(Leu) + AMP + diphosphate. The polypeptide is Leucine--tRNA ligase (Bordetella parapertussis (strain 12822 / ATCC BAA-587 / NCTC 13253)).